Reading from the N-terminus, the 655-residue chain is A-type voltage-gated potassium channel KCND3 (655 aa).

At 1-182 (MAAGVAAWLP…FENPHTSTLA (182 aa)) the chain is on the cytoplasmic side. An interaction with KCNIP1 and KCNIP2 region spans residues 6–21 (AAWLPFARAAAIGWMP). An interaction with KCNIP1 region spans residues 70–78 (EKEFFFNED). The Zn(2+) site is built by His104, Cys110, Cys131, and Cys132. Ser153 is subject to Phosphoserine. The chain crosses the membrane as a helical span at residues 183 to 204 (LVFYYVTGFFIAVSVITNVVET). Residues 205 to 223 (VPCGTVPGSKELPCGERYS) lie on the Extracellular side of the membrane. The chain crosses the membrane as a helical span at residues 224–246 (VAFFCLDTACVMIFTVEYLLRLF). Residues 247–253 (AAPSRYR) are Cytoplasmic-facing. A helical transmembrane segment spans residues 254-277 (FIRSVMSIIDVVAIMPYYIGLVMT). Residues 278 to 283 (NNEDVS) lie on the Extracellular side of the membrane. Residues 284–306 (GAFVTLRVFRVFRIFKFSRHSQG) traverse the membrane as a helical; Voltage-sensor segment. The Cytoplasmic portion of the chain corresponds to 307–318 (LRILGYTLKSCA). Residues 319-343 (SELGFLLFSLTMAIIIFATVMFYAE) form a helical membrane-spanning segment. The Extracellular portion of the chain corresponds to 344–352 (KGSSASKFT). The segment at residues 353 to 366 (SIPASFWYTIVTMT) is an intramembrane region (helical). Residues Thr367, Leu368, Gly369, and Tyr370 each coordinate K(+). The Selectivity filter motif lies at 367 to 372 (TLGYGD). An intramembrane segment occupies 367–374 (TLGYGDMV). Residues 378–400 (IAGKIFGSICSLSGVLVIALPVP) traverse the membrane as a helical segment. At 401–655 (VIVSNFSRIY…TSNVVKVSAL (255 aa)) the chain is on the cytoplasmic side. Thr459 is subject to Phosphothreonine. Residues 470-487 (SLIESQHHHLLHCLEKTT) are interaction with KCNIP1 and KCNIP2. Residues 472 to 487 (IESQHHHLLHCLEKTT) form a mediates dendritic targeting region. A disordered region spans residues 523–565 (SSMQNYPSTRSPSLSSHSGLTTTCCSRRSKKTTHLPNSNLPAT). Over residues 529 to 548 (PSTRSPSLSSHSGLTTTCCS) the composition is skewed to low complexity. A phosphoserine mark is found at Ser569 and Ser585. Positions 615 to 655 (ISIPTPPALTPEGESRPPPASPGPNTNIPSITSNVVKVSAL) are disordered. Residues 637–655 (GPNTNIPSITSNVVKVSAL) are compositionally biased toward polar residues.

It belongs to the potassium channel family. D (Shal) (TC 1.A.1.2) subfamily. Kv4.3/KCND3 sub-subfamily. In terms of assembly, homotetramer. Heterotetramer with KCND2. Associates with the regulatory subunit KCNIP3. Associates with the regulatory subunit KCNIP4. Interacts with KCNE1, KCNE2, SCN1B and KCNAB1 and DLG1. Component of heteromultimeric potassium channels. Identified in potassium channel complexes containing KCND1, KCND2, KCND3, KCNIP1, KCNIP2, KCNIP3, KCNIP4, DPP6 and DPP10. Interacts with KCNIP1; each KCNIP1 monomer interacts with two adjacent KCND3 subunits, through both the N-terminal inactivation ball of a KCND3 subunit and a C-terminal helix from the adjacent KCND3 subunit, clamping them together; this interaction stabilizes the tetrameric form and modulates the channel gating kinetics namely channel activation and inactivation kinetics and rate of recovery from inactivation. Interacts with DPP6; this interaction modulates the channel gating kinetics namely channel activation and inactivation kinetics and rate of recovery from inactivation. Interacts with KCNIP2; each KCNIP2 monomer interacts with two adjacent KCND3 subunits, through both the N-terminal inactivation ball of a KCND3 subunit and a C-terminal helix from the adjacent KCND3 subunit, clamping them together; this interaction modulates the channel gating kinetics. Post-translationally, regulated through phosphorylation at Ser-569 by CaMK2D.

The protein localises to the cell membrane. The protein resides in the sarcolemma. It localises to the cell projection. It is found in the dendrite. The catalysed reaction is K(+)(in) = K(+)(out). Pore-forming (alpha) subunit of voltage-gated A-type potassium channels that mediates transmembrane potassium transport in excitable membranes, in brain and heart. In cardiomyocytes, may generate the transient outward potassium current I(To). In neurons, may conduct the transient subthreshold somatodendritic A-type potassium current (ISA). Kinetics properties are characterized by fast activation at subthreshold membrane potentials, rapid inactivation, and quick recovery from inactivation. Channel properties are modulated by interactions with regulatory subunits. Interaction with the regulatory subunits KCNIP1 or KCNIP2 modulates the channel gating kinetics namely channel activation and inactivation kinetics and rate of recovery from inactivation. Likewise, interaction with DPP6 modulates the channel gating kinetics namely channel activation and inactivation kinetics. The chain is A-type voltage-gated potassium channel KCND3 from Mus musculus (Mouse).